The primary structure comprises 122 residues: uncharacterized protein (122 aa).

This is an uncharacterized protein from Saccharomyces cerevisiae (strain ATCC 204508 / S288c) (Baker's yeast).